The sequence spans 231 residues: Putative N-acetylmannosamine-6-phosphate 2-epimerase (231 aa).

This sequence belongs to the NanE family.

It catalyses the reaction an N-acyl-D-glucosamine 6-phosphate = an N-acyl-D-mannosamine 6-phosphate. It participates in amino-sugar metabolism; N-acetylneuraminate degradation; D-fructose 6-phosphate from N-acetylneuraminate: step 3/5. Functionally, converts N-acetylmannosamine-6-phosphate (ManNAc-6-P) to N-acetylglucosamine-6-phosphate (GlcNAc-6-P). The protein is Putative N-acetylmannosamine-6-phosphate 2-epimerase of Listeria monocytogenes serotype 4b (strain F2365).